A 215-amino-acid polypeptide reads, in one-letter code: Nascent polypeptide-associated complex subunit alpha (215 aa).

The disordered stretch occupies residues 1 to 81; the sequence is MPGEATETVP…SEKKARKAMS (81 aa). The span at 9 to 28 shows a compositional bias: polar residues; sequence VPATEQELPQPQAETGSGTE. The span at 29–40 shows a compositional bias: acidic residues; the sequence is SDSDESVPELEG. S43 bears the Phosphoserine; by ILK1 mark. The segment covering 44–57 has biased composition (low complexity); sequence TQATTQQAQLAAAA. The tract at residues 69–80 is required for DNA-binding; it reads QSRSEKKARKAM. The NAC-A/B domain occupies 70–135; that stretch reads SRSEKKARKA…AKIEDLSQQA (66 aa). The RNA/DNA-binding stretch occupies residues 93–108; it reads RVTIRKSKNILFVITK. At S132 the chain carries Phosphoserine. At K142 the chain carries N6-acetyllysine; alternate. Residue K142 forms a Glycyl lysine isopeptide (Lys-Gly) (interchain with G-Cter in SUMO2); alternate linkage. The residue at position 159 (T159) is a Phosphothreonine; by GSK3-beta. At T161 the chain carries Phosphothreonine. A phosphoserine mark is found at S166, S186, S191, and S203. A UBA domain is found at 176 to 213; that stretch reads VEVKDIEWVMSQANVSRAKAVRALKNNSNNIVNAIMEL.

It belongs to the NAC-alpha family. As to quaternary structure, part of the nascent polypeptide-associated complex (NAC), which is a heterodimer of NACA and BTF3 (via NAC-A/B domains). NAC associates with ribosomes through the BTF3/NACB subunit and contacts the ribosomal protein L23, which is positioned near the exiting site. Both subunits can contact nascent polypeptide chains. NACA may also form homodimers, and only this form binds DNA. Interacts with TBP and JUN. Phosphorylation of Ser-43 by ILK during cell adhesion may promote nuclear localization. Phosphorylation of Thr-159 by GSK3B may promote proteasome mediated degradation.

Its subcellular location is the cytoplasm. It is found in the nucleus. Its function is as follows. Prevents inappropriate targeting of non-secretory polypeptides to the endoplasmic reticulum (ER). Binds to nascent polypeptide chains as they emerge from the ribosome and blocks their interaction with the signal recognition particle (SRP), which normally targets nascent secretory peptides to the ER. Also reduces the inherent affinity of ribosomes for protein translocation sites in the ER membrane (M sites). May act as a specific coactivator for JUN, binding to DNA and stabilizing the interaction of JUN homodimers with target gene promoters. The protein is Nascent polypeptide-associated complex subunit alpha of Chinchilla lanigera (Long-tailed chinchilla).